The primary structure comprises 423 residues: Putative protein phosphatase 2C 50 (423 aa).

The region spanning 52 to 380 (IFAFPFPTGT…DNMAAVVVPL (329 aa)) is the PPM-type phosphatase domain. Residues Asp74, Gly75, Asp320, and Asp371 each coordinate Mn(2+).

It belongs to the PP2C family. Mg(2+) serves as cofactor. It depends on Mn(2+) as a cofactor.

The catalysed reaction is O-phospho-L-seryl-[protein] + H2O = L-seryl-[protein] + phosphate. It carries out the reaction O-phospho-L-threonyl-[protein] + H2O = L-threonyl-[protein] + phosphate. The sequence is that of Putative protein phosphatase 2C 50 from Arabidopsis thaliana (Mouse-ear cress).